The sequence spans 149 residues: D-aminoacyl-tRNA deacylase (149 aa).

Residues 137-138 (GP) carry the Gly-cisPro motif, important for rejection of L-amino acids motif.

The protein belongs to the DTD family. Homodimer.

It is found in the cytoplasm. The enzyme catalyses glycyl-tRNA(Ala) + H2O = tRNA(Ala) + glycine + H(+). It carries out the reaction a D-aminoacyl-tRNA + H2O = a tRNA + a D-alpha-amino acid + H(+). In terms of biological role, an aminoacyl-tRNA editing enzyme that deacylates mischarged D-aminoacyl-tRNAs. Also deacylates mischarged glycyl-tRNA(Ala), protecting cells against glycine mischarging by AlaRS. Acts via tRNA-based rather than protein-based catalysis; rejects L-amino acids rather than detecting D-amino acids in the active site. By recycling D-aminoacyl-tRNA to D-amino acids and free tRNA molecules, this enzyme counteracts the toxicity associated with the formation of D-aminoacyl-tRNA entities in vivo and helps enforce protein L-homochirality. The chain is D-aminoacyl-tRNA deacylase from Halothermothrix orenii (strain H 168 / OCM 544 / DSM 9562).